The primary structure comprises 233 residues: DnaA regulatory inactivator Hda (233 aa).

This sequence belongs to the DnaA family. HdA subfamily. As to quaternary structure, the active form seems to be an ADP-bound monomer. Forms the RIDA complex (regulatory inactivation of DnaA) of ATP-DnaA, ADP-Hda and the DNA-loaded beta sliding clamp (dnaN).

Mediates the interaction of DNA replication initiator protein DnaA with DNA polymerase subunit beta sliding clamp (dnaN). Stimulates hydrolysis of ATP-DnaA to ADP-DnaA, rendering DnaA inactive for reinitiation, a process called regulatory inhibition of DnaA or RIDA. This chain is DnaA regulatory inactivator Hda, found in Escherichia fergusonii (strain ATCC 35469 / DSM 13698 / CCUG 18766 / IAM 14443 / JCM 21226 / LMG 7866 / NBRC 102419 / NCTC 12128 / CDC 0568-73).